The primary structure comprises 266 residues: Non-structural maintenance of chromosomes element 1 homolog (266 aa).

Residues 1-102 (MQGSTRRMSV…SISKMATDFA (102 aa)) form an interaction with NSMCE3 region. The RING-type; atypical zinc finger occupies 191-232 (CNICHSLLIQGQSCETCGIRMHLPCVAKYFQSNAEPRCPHCN). Residues 245–266 (PEKERESGVSKSNKKSLRSRQH) are disordered. Serine 251 bears the Phosphoserine mark. The segment covering 256 to 266 (SNKKSLRSRQH) has biased composition (basic residues).

It belongs to the NSE1 family. As to quaternary structure, component of the SMC5-SMC6 complex which consists at least of SMC5, SMC6, NSMCE2, NSMCE1, NSMCE4A or EID3 and NSMCE3. NSMCE1, NSMCE4A or EID3 and NSMCE3 probably form a subcomplex that bridges the head domains of the SMC5-SMC6 heterodimer. Interacts with NSMCE3. Post-translationally, ubiquitinated.

The protein localises to the nucleus. The protein resides in the chromosome. Its subcellular location is the telomere. The catalysed reaction is S-ubiquitinyl-[E2 ubiquitin-conjugating enzyme]-L-cysteine + [acceptor protein]-L-lysine = [E2 ubiquitin-conjugating enzyme]-L-cysteine + N(6)-ubiquitinyl-[acceptor protein]-L-lysine.. RING-type zinc finger-containing E3 ubiquitin ligase that assembles with melanoma antigen protein (MAGE) to catalyze the direct transfer of ubiquitin from E2 ubiquitin-conjugating enzyme to a specific substrate. Within MAGE-RING ubiquitin ligase complex, MAGE stimulates and specifies ubiquitin ligase activity likely through recruitment and/or stabilization of the E2 ubiquitin-conjugating enzyme at the E3:substrate complex. Involved in maintenance of genome integrity, DNA damage response and DNA repair. NSMCE3/MAGEG1 and NSMCE1 ubiquitin ligase are components of SMC5-SMC6 complex and may positively regulate homologous recombination-mediated DNA repair. This is Non-structural maintenance of chromosomes element 1 homolog (NSMCE1) from Pongo abelii (Sumatran orangutan).